The sequence spans 294 residues: tRNA pseudouridine synthase B (294 aa).

Residue Asp-39 is the Nucleophile of the active site.

The protein belongs to the pseudouridine synthase TruB family. Type 1 subfamily.

The enzyme catalyses uridine(55) in tRNA = pseudouridine(55) in tRNA. Functionally, responsible for synthesis of pseudouridine from uracil-55 in the psi GC loop of transfer RNAs. The protein is tRNA pseudouridine synthase B of Streptococcus pyogenes serotype M3 (strain ATCC BAA-595 / MGAS315).